We begin with the raw amino-acid sequence, 624 residues long: Chaperone protein HtpG (624 aa).

The segment at 1–336 (MKTQKKEVYN…SSDLPLNISR (336 aa)) is a; substrate-binding. A b region spans residues 337 to 552 (EILQDNSITE…STEMTTQMAK (216 aa)). A c region spans residues 553 to 624 (LFSAAGQSVP…ISRMNKLLIK (72 aa)).

The protein belongs to the heat shock protein 90 family. In terms of assembly, homodimer.

It localises to the cytoplasm. Molecular chaperone. Has ATPase activity. The polypeptide is Chaperone protein HtpG (Buchnera aphidicola subsp. Acyrthosiphon pisum (strain APS) (Acyrthosiphon pisum symbiotic bacterium)).